A 224-amino-acid chain; its full sequence is Adenylate kinase (224 aa).

Position 10–15 (10–15 (GSGKGT)) interacts with ATP. Residues 30-59 (ESGAIFRDNIKGGTDLGMKAKAYIDKGDLV) are NMP. AMP is bound by residues S31, R36, 57-59 (DLV), 85-88 (GFPR), and Q92. An LID region spans residues 126–165 (GRRLCENDNNHPNNIFIDAIKPNGDKCRVCGGALSSRADD). R127 is an ATP binding site. AMP contacts are provided by R162 and R174. N211 contacts ATP.

Belongs to the adenylate kinase family. In terms of assembly, monomer.

Its subcellular location is the cytoplasm. The catalysed reaction is AMP + ATP = 2 ADP. The protein operates within purine metabolism; AMP biosynthesis via salvage pathway; AMP from ADP: step 1/1. Functionally, catalyzes the reversible transfer of the terminal phosphate group between ATP and AMP. Plays an important role in cellular energy homeostasis and in adenine nucleotide metabolism. This is Adenylate kinase from Desulforapulum autotrophicum (strain ATCC 43914 / DSM 3382 / VKM B-1955 / HRM2) (Desulfobacterium autotrophicum).